The primary structure comprises 238 residues: ATP-dependent dethiobiotin synthetase BioD (238 aa).

Residue Glu12 to Val17 coordinates ATP. Residue Thr16 coordinates Mg(2+). The active site involves Lys37. Position 41 (Thr41) interacts with substrate. ATP is bound by residues Asp50, Glu109–Gly112, Gly170–Ser171, and Pro200–Gly202. The Mg(2+) site is built by Asp50 and Glu109.

The protein belongs to the dethiobiotin synthetase family. In terms of assembly, homodimer. The cofactor is Mg(2+).

It is found in the cytoplasm. It carries out the reaction (7R,8S)-7,8-diammoniononanoate + CO2 + ATP = (4R,5S)-dethiobiotin + ADP + phosphate + 3 H(+). The protein operates within cofactor biosynthesis; biotin biosynthesis; biotin from 7,8-diaminononanoate: step 1/2. In terms of biological role, catalyzes a mechanistically unusual reaction, the ATP-dependent insertion of CO2 between the N7 and N8 nitrogen atoms of 7,8-diaminopelargonic acid (DAPA, also called 7,8-diammoniononanoate) to form a ureido ring. This is ATP-dependent dethiobiotin synthetase BioD from Streptomyces coelicolor (strain ATCC BAA-471 / A3(2) / M145).